The following is a 396-amino-acid chain: L-lactate dehydrogenase (396 aa).

An FMN hydroxy acid dehydrogenase domain is found at methionine 1–glycine 380. Substrate is bound at residue tyrosine 24. Residues serine 106 and glutamine 127 each coordinate FMN. Tyrosine 129 contributes to the substrate binding site. Threonine 155 lines the FMN pocket. Residue arginine 164 coordinates substrate. Lysine 251 serves as a coordination point for FMN. Catalysis depends on histidine 275, which acts as the Proton acceptor. Arginine 278 contacts substrate. Aspartate 306–arginine 330 is a binding site for FMN.

The protein belongs to the FMN-dependent alpha-hydroxy acid dehydrogenase family. FMN serves as cofactor.

The protein resides in the cell inner membrane. The catalysed reaction is (S)-lactate + A = pyruvate + AH2. Its function is as follows. Catalyzes the conversion of L-lactate to pyruvate. Is coupled to the respiratory chain. This Escherichia coli O81 (strain ED1a) protein is L-lactate dehydrogenase.